The primary structure comprises 537 residues: 2-succinyl-5-enolpyruvyl-6-hydroxy-3-cyclohexene-1-carboxylate synthase (537 aa).

It belongs to the TPP enzyme family. MenD subfamily. Homodimer. Requires Mg(2+) as cofactor. It depends on Mn(2+) as a cofactor. Thiamine diphosphate serves as cofactor.

The catalysed reaction is isochorismate + 2-oxoglutarate + H(+) = 5-enolpyruvoyl-6-hydroxy-2-succinyl-cyclohex-3-ene-1-carboxylate + CO2. The protein operates within quinol/quinone metabolism; 1,4-dihydroxy-2-naphthoate biosynthesis; 1,4-dihydroxy-2-naphthoate from chorismate: step 2/7. Its pathway is quinol/quinone metabolism; menaquinone biosynthesis. Functionally, catalyzes the thiamine diphosphate-dependent decarboxylation of 2-oxoglutarate and the subsequent addition of the resulting succinic semialdehyde-thiamine pyrophosphate anion to isochorismate to yield 2-succinyl-5-enolpyruvyl-6-hydroxy-3-cyclohexene-1-carboxylate (SEPHCHC). This Rhodococcus erythropolis (strain PR4 / NBRC 100887) protein is 2-succinyl-5-enolpyruvyl-6-hydroxy-3-cyclohexene-1-carboxylate synthase.